The sequence spans 428 residues: Serine--tRNA ligase (428 aa).

Residue Thr-235–Glu-237 coordinates L-serine. Residue Arg-266 to Glu-268 coordinates ATP. Glu-289 contacts L-serine. ATP is bound at residue Glu-353 to Ser-356. An L-serine-binding site is contributed by Ser-389.

This sequence belongs to the class-II aminoacyl-tRNA synthetase family. Type-1 seryl-tRNA synthetase subfamily. Homodimer. The tRNA molecule binds across the dimer.

Its subcellular location is the cytoplasm. The enzyme catalyses tRNA(Ser) + L-serine + ATP = L-seryl-tRNA(Ser) + AMP + diphosphate + H(+). It carries out the reaction tRNA(Sec) + L-serine + ATP = L-seryl-tRNA(Sec) + AMP + diphosphate + H(+). Its pathway is aminoacyl-tRNA biosynthesis; selenocysteinyl-tRNA(Sec) biosynthesis; L-seryl-tRNA(Sec) from L-serine and tRNA(Sec): step 1/1. In terms of biological role, catalyzes the attachment of serine to tRNA(Ser). Is also able to aminoacylate tRNA(Sec) with serine, to form the misacylated tRNA L-seryl-tRNA(Sec), which will be further converted into selenocysteinyl-tRNA(Sec). In Shewanella woodyi (strain ATCC 51908 / MS32), this protein is Serine--tRNA ligase.